The following is a 284-amino-acid chain: Nucleotide-binding protein NMC0691 (284 aa).

8 to 15 (GLSGSGKS) is an ATP binding site. Residue 58-61 (DVRS) coordinates GTP.

It belongs to the RapZ-like family.

Functionally, displays ATPase and GTPase activities. This is Nucleotide-binding protein NMC0691 from Neisseria meningitidis serogroup C / serotype 2a (strain ATCC 700532 / DSM 15464 / FAM18).